A 127-amino-acid polypeptide reads, in one-letter code: MRHRLSGRQLNRNSSHRQAMFRNMASSLVRHEIIKTTLPKAKELRRVVEPLITLAKTDSVANRRLAFARTRDNAIVAKLFNELGPRYLERAGGYTRILKCGFRAGDNAPMAYIELVDRPAAAEAAAE.

Belongs to the bacterial ribosomal protein bL17 family. Part of the 50S ribosomal subunit. Contacts protein L32.

This is Large ribosomal subunit protein bL17 from Aeromonas hydrophila subsp. hydrophila (strain ATCC 7966 / DSM 30187 / BCRC 13018 / CCUG 14551 / JCM 1027 / KCTC 2358 / NCIMB 9240 / NCTC 8049).